A 146-amino-acid chain; its full sequence is Large ribosomal subunit protein uL15 (146 aa).

The segment covering M1 to P10 has biased composition (basic and acidic residues). Positions M1–A41 are disordered.

The protein belongs to the universal ribosomal protein uL15 family. Part of the 50S ribosomal subunit.

Functionally, binds to the 23S rRNA. This is Large ribosomal subunit protein uL15 from Mycobacterium bovis (strain BCG / Pasteur 1173P2).